Here is a 632-residue protein sequence, read N- to C-terminus: tRNA uridine 5-carboxymethylaminomethyl modification enzyme MnmG (632 aa).

Residues 15–20 (GAGHAG), Ile-127, and Ser-182 contribute to the FAD site. 276–290 (GPRYCPSIEDKIVRF) contributes to the NAD(+) binding site. An FAD-binding site is contributed by Gln-373.

This sequence belongs to the MnmG family. In terms of assembly, homodimer. Heterotetramer of two MnmE and two MnmG subunits. Requires FAD as cofactor.

It is found in the cytoplasm. In terms of biological role, NAD-binding protein involved in the addition of a carboxymethylaminomethyl (cmnm) group at the wobble position (U34) of certain tRNAs, forming tRNA-cmnm(5)s(2)U34. This Streptococcus pyogenes serotype M3 (strain SSI-1) protein is tRNA uridine 5-carboxymethylaminomethyl modification enzyme MnmG.